The following is a 217-amino-acid chain: Thiamine-phosphate synthase (217 aa).

Residues 38–42 (QYRDK) and N70 contribute to the 4-amino-2-methyl-5-(diphosphooxymethyl)pyrimidine site. D71 and D90 together coordinate Mg(2+). Residue S109 coordinates 4-amino-2-methyl-5-(diphosphooxymethyl)pyrimidine. A 2-[(2R,5Z)-2-carboxy-4-methylthiazol-5(2H)-ylidene]ethyl phosphate-binding site is contributed by 136–138 (SIT). K139 is a binding site for 4-amino-2-methyl-5-(diphosphooxymethyl)pyrimidine. G166 is a binding site for 2-[(2R,5Z)-2-carboxy-4-methylthiazol-5(2H)-ylidene]ethyl phosphate.

Belongs to the thiamine-phosphate synthase family. Requires Mg(2+) as cofactor.

It catalyses the reaction 2-[(2R,5Z)-2-carboxy-4-methylthiazol-5(2H)-ylidene]ethyl phosphate + 4-amino-2-methyl-5-(diphosphooxymethyl)pyrimidine + 2 H(+) = thiamine phosphate + CO2 + diphosphate. The enzyme catalyses 2-(2-carboxy-4-methylthiazol-5-yl)ethyl phosphate + 4-amino-2-methyl-5-(diphosphooxymethyl)pyrimidine + 2 H(+) = thiamine phosphate + CO2 + diphosphate. The catalysed reaction is 4-methyl-5-(2-phosphooxyethyl)-thiazole + 4-amino-2-methyl-5-(diphosphooxymethyl)pyrimidine + H(+) = thiamine phosphate + diphosphate. The protein operates within cofactor biosynthesis; thiamine diphosphate biosynthesis; thiamine phosphate from 4-amino-2-methyl-5-diphosphomethylpyrimidine and 4-methyl-5-(2-phosphoethyl)-thiazole: step 1/1. Functionally, condenses 4-methyl-5-(beta-hydroxyethyl)thiazole monophosphate (THZ-P) and 2-methyl-4-amino-5-hydroxymethyl pyrimidine pyrophosphate (HMP-PP) to form thiamine monophosphate (TMP). The protein is Thiamine-phosphate synthase of Nitrosococcus oceani (strain ATCC 19707 / BCRC 17464 / JCM 30415 / NCIMB 11848 / C-107).